The following is a 752-amino-acid chain: Kaurene synthase like 2, chloroplastic (752 aa).

Residues 1 to 28 constitute a chloroplast transit peptide; that stretch reads MSLLLSNSALVGPKFRSSRISHASASLD. Residues aspartate 538, aspartate 542, asparagine 682, and glutamate 690 each contribute to the Mg(2+) site. Residues 538–542 carry the DDXXD motif motif; sequence DDLFD.

Belongs to the terpene synthase family. Mg(2+) is required as a cofactor. Highly expressed in leaves.

The protein resides in the plastid. It localises to the chloroplast. It functions in the pathway secondary metabolite biosynthesis; terpenoid biosynthesis. Involved in the biosynthesis of ent-kaurene diterpenoids natural products such as oridonin, miltiradiene, eriocalyxin B and nezukol, known to exhibit antitumor, anti-inflammatory and antibacterial activities. Catalyzes the conversion of ent-copalyl diphosphate (ent-CPP) to ent-isopimaradiene like compounds. The polypeptide is Kaurene synthase like 2, chloroplastic (Isodon rubescens (Rabdosia rubescens)).